The following is a 405-amino-acid chain: Probable tRNA sulfurtransferase (405 aa).

The THUMP domain maps to 60 to 165; sequence QEVSASLKKI…PDAAYISHEE (106 aa). ATP is bound by residues 183-184, 208-209, Arg265, Gly287, and Gln296; these read ML and HF.

This sequence belongs to the ThiI family.

The protein localises to the cytoplasm. It catalyses the reaction [ThiI sulfur-carrier protein]-S-sulfanyl-L-cysteine + a uridine in tRNA + 2 reduced [2Fe-2S]-[ferredoxin] + ATP + H(+) = [ThiI sulfur-carrier protein]-L-cysteine + a 4-thiouridine in tRNA + 2 oxidized [2Fe-2S]-[ferredoxin] + AMP + diphosphate. The catalysed reaction is [ThiS sulfur-carrier protein]-C-terminal Gly-Gly-AMP + S-sulfanyl-L-cysteinyl-[cysteine desulfurase] + AH2 = [ThiS sulfur-carrier protein]-C-terminal-Gly-aminoethanethioate + L-cysteinyl-[cysteine desulfurase] + A + AMP + 2 H(+). The protein operates within cofactor biosynthesis; thiamine diphosphate biosynthesis. Functionally, catalyzes the ATP-dependent transfer of a sulfur to tRNA to produce 4-thiouridine in position 8 of tRNAs, which functions as a near-UV photosensor. Also catalyzes the transfer of sulfur to the sulfur carrier protein ThiS, forming ThiS-thiocarboxylate. This is a step in the synthesis of thiazole, in the thiamine biosynthesis pathway. The sulfur is donated as persulfide by IscS. This Streptococcus suis (strain 98HAH33) protein is Probable tRNA sulfurtransferase.